Reading from the N-terminus, the 286-residue chain is 3-hydroxybutyryl-CoA dehydrogenase (286 aa).

It belongs to the 3-hydroxyacyl-CoA dehydrogenase family.

The catalysed reaction is 3-hydroxybutanoyl-CoA + NAD(+) = acetoacetyl-CoA + NADH + H(+). The enzyme catalyses (3S)-3-hydroxybutanoyl-CoA + NADP(+) = acetoacetyl-CoA + NADPH + H(+). It participates in lipid metabolism; butanoate metabolism. The chain is 3-hydroxybutyryl-CoA dehydrogenase (fadB2) from Mycobacterium tuberculosis (strain CDC 1551 / Oshkosh).